We begin with the raw amino-acid sequence, 283 residues long: Diphthine methyl ester synthase (283 aa).

Residues Leu9, Asp84, Gly87, 112-113 (SI), Leu163, Met221, and His246 contribute to the S-adenosyl-L-methionine site.

It belongs to the diphthine synthase family.

The protein localises to the cytoplasm. The catalysed reaction is 2-[(3S)-amino-3-carboxypropyl]-L-histidyl-[translation elongation factor 2] + 4 S-adenosyl-L-methionine = diphthine methyl ester-[translation elongation factor 2] + 4 S-adenosyl-L-homocysteine + 3 H(+). It participates in protein modification; peptidyl-diphthamide biosynthesis. In terms of biological role, S-adenosyl-L-methionine-dependent methyltransferase that catalyzes four methylations of the modified target histidine residue in translation elongation factor 2 (EF-2), to form an intermediate called diphthine methyl ester. The four successive methylation reactions represent the second step of diphthamide biosynthesis. This chain is Diphthine methyl ester synthase (dph5), found in Schizosaccharomyces pombe (strain 972 / ATCC 24843) (Fission yeast).